Here is a 951-residue protein sequence, read N- to C-terminus: AP-1 complex subunit beta-1 (951 aa).

Residue Lys-318 is modified to N6-acetyllysine. A 3'-nitrotyrosine modification is found at Tyr-574.

It belongs to the adaptor complexes large subunit family. As to quaternary structure, adaptor protein complex 1 (AP-1) is a heterotetramer composed of two large adaptins (gamma-type subunit AP1G1 and beta-type subunit AP1B1), a medium adaptin (mu-type subunit AP1M1 or AP1M2) and a small adaptin (sigma-type subunit AP1S1 or AP1S2 or AP1S3).

The protein resides in the cytoplasmic vesicle. The protein localises to the clathrin-coated vesicle membrane. Its subcellular location is the golgi apparatus. Subunit of clathrin-associated adaptor protein complex 1 that plays a role in protein sorting in the late-Golgi/trans-Golgi network (TGN) and/or endosomes. The AP complexes mediate both the recruitment of clathrin to membranes and the recognition of sorting signals within the cytosolic tails of transmembrane cargo molecules. The chain is AP-1 complex subunit beta-1 (AP2B1) from Bos taurus (Bovine).